Reading from the N-terminus, the 367-residue chain is Histidinol-phosphate aminotransferase (367 aa).

Residue Lys-221 is modified to N6-(pyridoxal phosphate)lysine.

Belongs to the class-II pyridoxal-phosphate-dependent aminotransferase family. Histidinol-phosphate aminotransferase subfamily. In terms of assembly, homodimer. It depends on pyridoxal 5'-phosphate as a cofactor.

The enzyme catalyses L-histidinol phosphate + 2-oxoglutarate = 3-(imidazol-4-yl)-2-oxopropyl phosphate + L-glutamate. Its pathway is amino-acid biosynthesis; L-histidine biosynthesis; L-histidine from 5-phospho-alpha-D-ribose 1-diphosphate: step 7/9. In Paracoccus denitrificans (strain Pd 1222), this protein is Histidinol-phosphate aminotransferase.